The following is a 276-amino-acid chain: Large ribosomal subunit protein uL2 (276 aa).

Positions 223-276 are disordered; it reads GVAMNPVDHPHGGGEGRGKGHHPTSPWGLPTKGYKTRRGKRPSDKFIVRRRNEV. Composition is skewed to basic and acidic residues over residues 230-240 and 263-276; these read DHPHGGGEGRG and RPSD…RNEV.

Belongs to the universal ribosomal protein uL2 family. As to quaternary structure, part of the 50S ribosomal subunit. Forms a bridge to the 30S subunit in the 70S ribosome.

In terms of biological role, one of the primary rRNA binding proteins. Required for association of the 30S and 50S subunits to form the 70S ribosome, for tRNA binding and peptide bond formation. It has been suggested to have peptidyltransferase activity; this is somewhat controversial. Makes several contacts with the 16S rRNA in the 70S ribosome. The polypeptide is Large ribosomal subunit protein uL2 (Thermotoga neapolitana (strain ATCC 49049 / DSM 4359 / NBRC 107923 / NS-E)).